Consider the following 2560-residue polypeptide: MAQSAQIQDIYPLSHMQEGMLFHSLMDFSSKAYIEQTSFTITGNLCVDSFQKSLNLLVSRYDIFRTIFIKEVPDLTGPQQVVLSNRELTVYREDISRLADQEQQTLIDAFMTKDREKGFDLQKDPLMRLALFDRGDSQYTCVWTHHHIIMDGWCLGIILKEFFSMYDSLKNNSPVQLGSTVPYSRYIEWLGEQDQEETAAYWSEYLKEYGNTASIPRIKRRTADGNYKADQVSFSLAPDMVEKLTEAAQNWGVTLNTLFMSIWGVLLHRYNAADDAVFGSVISGRPSAIDGIESMVGLFINTVPVRIRSAEGITFSSLVKAVQEDILSSEQHGYYPLYEIQNHSPLKQGLIDHIFVFENYPVQLHQALSVESENDEGALKLSDISMSEQTNYDFNIVIVPGESFYIKFSYNADVYEREEMLRIQGHLKQALDCILTNPDVAVSDINIVPPEEQQVIQLFNETERPYVNKTIPQLFEEQAHKTPEAAALKMGNECWTYRQLQVRANQIAHALIEKGVGSGDIVAVMMGRSMEMPAALLGIWKAGGAYMPLDPHFPAERLSFLLKDSQAAQLLIEEDLISLIPPSYEGNTITIEHTESYQTEAPNMPPGDLAYLIYTSGTTGRPKGVLVDHHGIANTLQWRREEYSMTEQDISLHLFSYVFDGCVTSLFTPLLSGACVLLTTDDEAKDVLALKRKIARYKVSHMIIVPSLYRVLLEVMTADDAKSLRIVTFAGEAVTPDLLELNQIICPSAELANEYGPTENSVATTILRHLNKKERITIGHPIRNTKVFVLHGNQMQPIGAAGELCISGAGLARGYYKQQELTQKAFSDHPFLEGERLYRTGDAGRFLPDGTIEYIGRFDDQVKIRGYRIELREIETVLRQAPGVKEAAVLARDVSAEEKELVAYIVPEKGNSLPDLYQHLAGTLPSYMIPASIINISQMPLTSSGKLDRFALPEPENNTSVTYMAPRTLIEADLAHIWEDVLNKQHIGIRDDFFQLGGQSLKAAALVSRIHKKLNVELPLSEVFSYPTVESMAVKLMSLKEHAFTQIEPADQRDVYPLSFSQKRLYALHQLADDSTGYNMPAVLELRGNLNRQRLRSVLTELVNRHEALRTVFVLDRDEPVQIIYPEMAFDLKELEMESEQMLESAIETFIKPFYLSSGPLFRACVITMGNNRGFLLLDMHHIIADGVSMSTLVQEFTDLYCGKELPALNLHYKDFAVWQQEKHPKELYKKQEAYWLGQLGGSLPTLELPLDKTRPRLPDFRGGTIEVNIDKDMADELHRLMAETGTTLYMILLAVYSILLSKLSGQEDIVVGSPAAGRPHADLERVIGMFVNTLAMRSKPEGHKTFSSYLHDIRHLALTAYEHQDYPFEELADKLDTNREVNRNPLFDAMLVLQSSEDFRFEVPGLSISSVTPKHDISKFDLTLHAEEHLSGIRCRFEYSTALFEEETITQWASYFIELVKGVTADTEMRISNMQLLPAAERRLLLEKMGQYAAYPRNENIVSLFEKQVAQYPEHIAVVCGHSQLTYRDLNEKAERAAAMLIKQGVRTGDIVGLMLDRSPDMIIGVLSILKAGGAYLPIDPEYPKERISFMLNDSGAKLLLTERGLNKPADYTGHILYIDECENNSIPADVNIEEIVTDQPAYVIYTSGTTGQPKGVIVEHRNVISLLKHQNLPFEFNHEDVWTLFHSYCFDFSVWEMFGALLNGSTLVVVSKETARDPQAFRLLLKKERVTVLNQTPTAFYGLMLEDQNHTDHLNIRYVIFGGEALQPGLLQSWNEKYPHTDLINMYGITETTVHVTFKKLSAADIAKNKSNIGRPLSTLQAHVMDAHMNLQPTGVPGELYIGGEGVARGYLNRDELTADRFVSNPYLPGDRLYRTGDLAKRLSNGELEYLGRIDEQVKVRGHRIELGEIQAALLQYPMIKEAAVITRADEQGQTAIYAYMVIKDQQAANISDIRTYLKNALPDFMLPARMIQIDSIPVTVNGKLDQKALPEPEKQAYTADDISPRNEIETVMAEIWEELLNVDELGVSANFFKLGGDSIKALQVCARLKQRGFETTVREMFEHQTLGELSARVRKDVRAIDQGPVEGEITWTPIQQWFFSQSLESHHFNQSVMIYRAERFDEAALRKVLKSLVTHHDALRIVCRHEDGRQVQINRGIDLSDEELYALELFDVKDSLTEARNTIEEAASRMQEHIRLETGPLLHAGLFRTENGDHLFLTIHHLVVDAVSWRILFEDFSTAYKQAVSGESIKLPQKTDSYLTYSQRIADYSISRQVQREAAYWDECENRHIQPIPKDNDAASNTFKDTEVIDFELSRHHTELLLTAAHKAYSTEMNDILLTALGLALQKWTGNNQFKISMEGHGRESYLEDIDISRTVGWFTSIYPVWLDMRDSDHKDKEERLGHLIKQTKDMLHRIPHKGAGYGVLKYISKRWGSQKNSPEISFNYLGQFDQDIQSNAFEVSDIKPGNEISPNWERPYALDISGAVSSGCLNMHIIYNRFQFEEKTIQTFSRHFKQTLENIIEHCTGKENQEWSASDFTDEDLTLDELSEIMGAVNKL.

A condensation 1 region spans residues 7 to 310 (IQDIYPLSHM…NTVPVRIRSA (304 aa)). A domain 1 (tyrosine-activating) region spans residues 7-1042 (IQDIYPLSHM…AVKLMSLKEH (1036 aa)). The segment at 496–889 (TYRQLQVRAN…QAPGVKEAAV (394 aa)) is adenylation 1. A Carrier 1 domain is found at 965–1040 (APRTLIEADL…SMAVKLMSLK (76 aa)). An O-(pantetheine 4'-phosphoryl)serine modification is found at Ser-1000. The condensation 2 stretch occupies residues 1052–1342 (QRDVYPLSFS…NTLAMRSKPE (291 aa)). A domain 2 (D-allo-threonine-activating) region spans residues 1052 to 2553 (QRDVYPLSFS…DLTLDELSEI (1502 aa)). The segment at 1527-1927 (TYRDLNEKAE…QYPMIKEAAV (401 aa)) is adenylation 2. The region spanning 2006–2080 (SPRNEIETVM…ELSARVRKDV (75 aa)) is the Carrier 2 domain. Position 2041 is an O-(pantetheine 4'-phosphoryl)serine (Ser-2041). Residues 2088–2553 (VEGEITWTPI…DLTLDELSEI (466 aa)) form an epimerization region.

Belongs to the ATP-dependent AMP-binding enzyme family. Pantetheine 4'-phosphate is required as a cofactor.

This protein is a multifunctional enzyme, able to activate and polymerize the amino acids Tyr and Thr as part of the biosynthesis of the lipopeptide antibiotic plipastatin. The Thr residue is further converted to the D-allo-isomer form. The activation sites for these amino acids consist of individual domains. In Bacillus subtilis (strain 168), this protein is Plipastatin synthase subunit B (ppsB).